We begin with the raw amino-acid sequence, 147 residues long: Hemoglobin subunit gamma (147 aa).

Residues 3–147 (HFTAEEKAII…VAIALGHKYH (145 aa)) enclose the Globin domain. Positions 64 and 93 each coordinate heme b.

This sequence belongs to the globin family. In terms of assembly, heterotetramer of two alpha chains and two gamma chains in fetal hemoglobin (Hb F). In terms of tissue distribution, red blood cells.

Its function is as follows. Gamma chains make up the fetal hemoglobin F, in combination with alpha chains. This is Hemoglobin subunit gamma (HBG) from Cephalopachus bancanus (Western tarsier).